A 231-amino-acid chain; its full sequence is UPF0702 transmembrane protein YetF (231 aa).

3 helical membrane-spanning segments follow: residues 5 to 25 (LSVA…LKLL), 33 to 53 (ITPF…NAVY), and 59 to 79 (IKEI…IEFI).

It belongs to the UPF0702 family.

The protein resides in the cell membrane. In Bacillus subtilis (strain 168), this protein is UPF0702 transmembrane protein YetF (yetF).